We begin with the raw amino-acid sequence, 319 residues long: RNA exonuclease 4 (319 aa).

Residues 1–75 are disordered; it reads MAALSSNWKK…GGVHSSKIEE (75 aa). Residues 132–293 enclose the Exonuclease domain; it reads KYIAIDCEMV…FRKHKSAFDV (162 aa). The segment at 295–319 is disordered; it reads HANRYAPKTASGGGQKGNKPKKKKK.

It belongs to the REXO4 family.

Its subcellular location is the nucleus. In terms of biological role, exoribonuclease involved in ribosome biosynthesis. Involved in the processing of ITS1, the internal transcribed spacer localized between the 18S and 5.8S rRNAs. This chain is RNA exonuclease 4 (REX4), found in Gibberella zeae (strain ATCC MYA-4620 / CBS 123657 / FGSC 9075 / NRRL 31084 / PH-1) (Wheat head blight fungus).